A 1218-amino-acid chain; its full sequence is ATP-dependent helicase/deoxyribonuclease subunit B (1218 aa).

The UvrD-like helicase ATP-binding domain occupies 1-279; it reads MRFIVGRAGT…VFLTETHRFE (279 aa). An ATP-binding site is contributed by 6-13; that stretch reads GRAGTGKS. The UvrD-like helicase C-terminal domain occupies 281–588; sequence AGLKHLERFY…LVGSLDRSRN (308 aa). C786 is a binding site for [4Fe-4S] cluster. A disordered region spans residues 987–1006; sequence LAEGSKGSEGSEGSEDSEDS. Positions 1126, 1129, and 1135 each coordinate [4Fe-4S] cluster. The span at 1160 to 1169 shows a compositional bias: polar residues; that stretch reads RVQSQDSEQY. The segment at 1160–1218 is disordered; the sequence is RVQSQDSEQYPEQHPPTSVPGETSRRALQKDGGNSPRGQELIWLGEDEAGAGKEDDGHE. Residues 1209–1218 show a composition bias toward basic and acidic residues; sequence GAGKEDDGHE.

It belongs to the helicase family. AddB/RexB type 1 subfamily. As to quaternary structure, heterodimer of AddA and AddB. Mg(2+) serves as cofactor. The cofactor is [4Fe-4S] cluster.

Its function is as follows. The heterodimer acts as both an ATP-dependent DNA helicase and an ATP-dependent, dual-direction single-stranded exonuclease. Recognizes the chi site generating a DNA molecule suitable for the initiation of homologous recombination. The AddB subunit has 5' -&gt; 3' nuclease activity but not helicase activity. The sequence is that of ATP-dependent helicase/deoxyribonuclease subunit B from Desulfitobacterium hafniense (strain DSM 10664 / DCB-2).